The primary structure comprises 926 residues: Periplasmic nitrate reductase (926 aa).

Residues methionine 1–alanine 30 constitute a signal peptide (tat-type signal). The region spanning tryptophan 37 to aspartate 93 is the 4Fe-4S Mo/W bis-MGD-type domain. [4Fe-4S] cluster-binding residues include cysteine 44, cysteine 47, cysteine 51, and cysteine 79. Residues lysine 81, glutamine 149, asparagine 174, cysteine 178, tryptophan 211–methionine 218, methionine 419, glutamine 423, asparagine 529, serine 554–aspartate 555, lysine 577, aspartate 604, and threonine 816–serine 825 contribute to the Mo-bis(molybdopterin guanine dinucleotide) site. Tryptophan 892 contributes to the substrate binding site. Mo-bis(molybdopterin guanine dinucleotide) contacts are provided by asparagine 900 and lysine 917.

It belongs to the prokaryotic molybdopterin-containing oxidoreductase family. NasA/NapA/NarB subfamily. Component of the periplasmic nitrate reductase NapAB complex composed of NapA and NapB. [4Fe-4S] cluster serves as cofactor. The cofactor is Mo-bis(molybdopterin guanine dinucleotide). Post-translationally, predicted to be exported by the Tat system. The position of the signal peptide cleavage has not been experimentally proven.

The protein resides in the periplasm. The catalysed reaction is 2 Fe(II)-[cytochrome] + nitrate + 2 H(+) = 2 Fe(III)-[cytochrome] + nitrite + H2O. In terms of biological role, catalytic subunit of the periplasmic nitrate reductase complex NapAB. Receives electrons from NapB and catalyzes the reduction of nitrate to nitrite. This is Periplasmic nitrate reductase from Campylobacter curvus (strain 525.92).